Consider the following 267-residue polypeptide: GTP cyclohydrolase FolE2 2 (267 aa).

It belongs to the GTP cyclohydrolase IV family.

It catalyses the reaction GTP + H2O = 7,8-dihydroneopterin 3'-triphosphate + formate + H(+). Its pathway is cofactor biosynthesis; 7,8-dihydroneopterin triphosphate biosynthesis; 7,8-dihydroneopterin triphosphate from GTP: step 1/1. In terms of biological role, converts GTP to 7,8-dihydroneopterin triphosphate. This Cupriavidus metallidurans (strain ATCC 43123 / DSM 2839 / NBRC 102507 / CH34) (Ralstonia metallidurans) protein is GTP cyclohydrolase FolE2 2.